A 129-amino-acid chain; its full sequence is Small ribosomal subunit protein uS11 (129 aa).

It belongs to the universal ribosomal protein uS11 family. As to quaternary structure, part of the 30S ribosomal subunit. Interacts with proteins S7 and S18. Binds to IF-3.

Its function is as follows. Located on the platform of the 30S subunit, it bridges several disparate RNA helices of the 16S rRNA. Forms part of the Shine-Dalgarno cleft in the 70S ribosome. This is Small ribosomal subunit protein uS11 from Haemophilus influenzae (strain 86-028NP).